Reading from the N-terminus, the 487-residue chain is Probable cytosol aminopeptidase (487 aa).

Residues K253 and D258 each contribute to the Mn(2+) site. Residue K265 is part of the active site. Mn(2+) is bound by residues D277, D337, and E339. R341 is an active-site residue.

It belongs to the peptidase M17 family. Mn(2+) serves as cofactor.

It is found in the cytoplasm. The catalysed reaction is Release of an N-terminal amino acid, Xaa-|-Yaa-, in which Xaa is preferably Leu, but may be other amino acids including Pro although not Arg or Lys, and Yaa may be Pro. Amino acid amides and methyl esters are also readily hydrolyzed, but rates on arylamides are exceedingly low.. It catalyses the reaction Release of an N-terminal amino acid, preferentially leucine, but not glutamic or aspartic acids.. Presumably involved in the processing and regular turnover of intracellular proteins. Catalyzes the removal of unsubstituted N-terminal amino acids from various peptides. The polypeptide is Probable cytosol aminopeptidase (Parasynechococcus marenigrum (strain WH8102)).